The following is a 188-amino-acid chain: MSRAQDRIGTWIGWTFFADLANALTLTFGYMFSSPVTMQYPDTEKWLPYSRYRGHHFLKRDEEGEIKCVACELCARICPCDCIEVVPYEDEKGNRHPAKFEIDTARCLFCGLCEDACPADAIALGQQYEFSSFSSADLVIGRDDLLAKPGKAATGGGVVSARLNTKKDVLVETKEMQGYNWWRNIRRT.

4Fe-4S ferredoxin-type domains are found at residues 56-88 and 98-127; these read HFLKRDEEGEIKCVACELCARICPCDCIEVVPY and AKFEIDTARCLFCGLCEDACPADAIALGQQ. The [4Fe-4S] cluster site is built by C68, C71, C74, C78, C107, C110, C113, and C117.

It belongs to the complex I 23 kDa subunit family. As to quaternary structure, NDH-1 is composed of 14 different subunits. Subunits NuoA, H, J, K, L, M, N constitute the membrane sector of the complex. [4Fe-4S] cluster serves as cofactor.

Its subcellular location is the cell inner membrane. The enzyme catalyses a quinone + NADH + 5 H(+)(in) = a quinol + NAD(+) + 4 H(+)(out). In terms of biological role, NDH-1 shuttles electrons from NADH, via FMN and iron-sulfur (Fe-S) centers, to quinones in the respiratory chain. The immediate electron acceptor for the enzyme in this species is believed to be ubiquinone. Couples the redox reaction to proton translocation (for every two electrons transferred, four hydrogen ions are translocated across the cytoplasmic membrane), and thus conserves the redox energy in a proton gradient. The chain is NADH-quinone oxidoreductase subunit I 2 from Rhizobium etli (strain ATCC 51251 / DSM 11541 / JCM 21823 / NBRC 15573 / CFN 42).